The primary structure comprises 315 residues: Olfactory receptor 51L1 (315 aa).

The Extracellular portion of the chain corresponds to 1–27 (MGDWNNSDAVEPIFILRGFPGLEYVHS). An N-linked (GlcNAc...) asparagine glycan is attached at Asn-5. A helical transmembrane segment spans residues 28-48 (WLSILFCLAYLVAFMGNVTIL). The Cytoplasmic portion of the chain corresponds to 49 to 56 (SVIWIESS). Residues 57-77 (LHQPMYYFISILAVNDLGMSL) form a helical membrane-spanning segment. The Extracellular segment spans residues 78 to 101 (STLPTMLAVLWLDAPEIQASACYA). Cys-99 and Cys-191 are oxidised to a cystine. A helical membrane pass occupies residues 102-122 (QLFFIHTFTFLESSVLLAMAF). The Cytoplasmic portion of the chain corresponds to 123–141 (DRFVAICHPLHYPTILTNS). A helical transmembrane segment spans residues 142–162 (VIGKIGLACLLRSLGVVLPTP). Over 163-198 (LLLRHYHYCHGNALSHAFCLHQDVLRLSCTDARTNS) the chain is Extracellular. The chain crosses the membrane as a helical span at residues 199 to 219 (IYGLCVVIATLGVDSIFILLS). At 220–239 (YVLILNTVLDIASREEQLKA) the chain is on the cytoplasmic side. A helical membrane pass occupies residues 240–260 (LNTCVSHICVVLIFFVPVIGV). Topologically, residues 261–275 (SMVHRFGKHLSPIVH) are extracellular. Residues 276-296 (ILMADIYLLLPPVLNPIVYSV) traverse the membrane as a helical segment. Topologically, residues 297 to 315 (RTKQIRLGILHKFVLRRRF) are cytoplasmic.

The protein belongs to the G-protein coupled receptor 1 family.

The protein resides in the cell membrane. Functionally, odorant receptor. The polypeptide is Olfactory receptor 51L1 (OR51L1) (Homo sapiens (Human)).